A 936-amino-acid polypeptide reads, in one-letter code: Protocadherin alpha-5 (936 aa).

A signal peptide spans 1–28 (MVYSRRGSLGSRLLLLWLLLAYWKAGSG). At 29–696 (QLHYSIPEEA…GPEAALVDVN (668 aa)) the chain is on the extracellular side. 6 consecutive Cadherin domains span residues 33–132 (SIPE…PPRF), 156–241 (ASDL…APEF), 242–349 (DKSI…TPEM), 350–454 (AITT…APAF), 455–564 (AQPQ…APAL), and 580–677 (VPRS…APKA). N-linked (GlcNAc...) asparagine glycosylation is present at Asn264. Asn547 carries N-linked (GlcNAc...) asparagine glycosylation. The helical transmembrane segment at 697–717 (VYLIIAICAVSSLLVLTLLLY) threads the bilayer. The Cytoplasmic portion of the chain corresponds to 718 to 936 (TALRCSAQPT…GNSTTDNSDQ (219 aa)). Disordered regions lie at residues 759 to 793 (SGEAPPKTDLMAFSPSLPQGPTSTDNPRQPNPDWR) and 816 to 936 (AGPG…NSDQ). 5 PXXP repeats span residues 773 to 776 (PSLP), 785 to 788 (PRQP), 818 to 821 (PGGP), 873 to 876 (KFII), and 877 to 890 (PGSPAIISIRQEPT). Residues 773-890 (PSLPQGPTST…AIISIRQEPT (118 aa)) are 5 X 4 AA repeats of P-X-X-P. Residues 774–786 (SLPQGPTSTDNPR) show a composition bias toward polar residues. Over residues 895–909 (DKSDFITFGKKEETK) the composition is skewed to basic and acidic residues.

It is found in the cell membrane. Potential calcium-dependent cell-adhesion protein. May be involved in the establishment and maintenance of specific neuronal connections in the brain. In Homo sapiens (Human), this protein is Protocadherin alpha-5 (PCDHA5).